The sequence spans 310 residues: MSEELSKKHTNRLNKLQKRLRREVGSAIADYNMIEDGDKIMCCLSGGKDSYAMLDILMNLQQRAPIQFEIIAVNLDQKQPGFPEHVLPAYLEKLNVPYHILEKDTYSIVKDKIPEGKTTCSLCSRLRRGTLYGFAQRIGATKIALGHHRDDIIETLFLNMFFGGKMKAMPPKLLSDDGANVVIRPLAYCREKDLEEYANLKEFPIIPCNLCGSQENLKRAAVKDMLNQWDRQYPGRIETIFTAMQNTAPSQGVDREQFDFVSLTRDPDAPMRGDVAEANLPAFDFLDIANSGRIDLDAAKRIDIVNTYEV.

The PP-loop motif signature appears at 45 to 50 (SGGKDS). 3 residues coordinate [4Fe-4S] cluster: Cys120, Cys123, and Cys211.

The protein belongs to the TtcA family. In terms of assembly, homodimer. Mg(2+) serves as cofactor. Requires [4Fe-4S] cluster as cofactor.

The protein localises to the cytoplasm. The enzyme catalyses cytidine(32) in tRNA + S-sulfanyl-L-cysteinyl-[cysteine desulfurase] + AH2 + ATP = 2-thiocytidine(32) in tRNA + L-cysteinyl-[cysteine desulfurase] + A + AMP + diphosphate + H(+). The protein operates within tRNA modification. In terms of biological role, catalyzes the ATP-dependent 2-thiolation of cytidine in position 32 of tRNA, to form 2-thiocytidine (s(2)C32). The sulfur atoms are provided by the cysteine/cysteine desulfurase (IscS) system. The sequence is that of tRNA-cytidine(32) 2-sulfurtransferase from Shewanella baltica (strain OS155 / ATCC BAA-1091).